A 167-amino-acid polypeptide reads, in one-letter code: uncharacterized protein (167 aa).

The next 4 helical transmembrane spans lie at L13–I33, V37–Y57, W61–E81, and L103–S123.

Its subcellular location is the cell membrane. This is an uncharacterized protein from Haemophilus influenzae (strain ATCC 51907 / DSM 11121 / KW20 / Rd).